The sequence spans 148 residues: Deoxyuridine 5'-triphosphate nucleotidohydrolase (148 aa).

Substrate contacts are provided by residues 68–70 (RSG), Asn81, and 85–87 (TID).

Belongs to the dUTPase family. Mg(2+) is required as a cofactor.

The catalysed reaction is dUTP + H2O = dUMP + diphosphate + H(+). It functions in the pathway pyrimidine metabolism; dUMP biosynthesis; dUMP from dCTP (dUTP route): step 2/2. Functionally, this enzyme is involved in nucleotide metabolism: it produces dUMP, the immediate precursor of thymidine nucleotides and it decreases the intracellular concentration of dUTP so that uracil cannot be incorporated into DNA. The chain is Deoxyuridine 5'-triphosphate nucleotidohydrolase from Geobacter metallireducens (strain ATCC 53774 / DSM 7210 / GS-15).